Consider the following 665-residue polypeptide: LisH domain-containing protein ARMC9 (665 aa).

The LisH domain maps to 7–39 (HESELLGLVKEYLDFAEFEDTLKTFLKECKIKG). Residues 204 to 235 (QSNKDVLQQLHQQLVEAERRSMTYLKRYNRIQ) are a coiled coil. Phosphoserine is present on serine 582. Acidic residues predominate over residues 582-603 (SDDDEDEDDEEDHDTMEADLDK). Disordered stretches follow at residues 582 to 604 (SDDD…LDKD) and 636 to 665 (RRGT…GYPA).

As to quaternary structure, interacts with TOGARAM1, CCDC66, CEP104, CSPP1 and CEP290. Interacts with NDUFAF2.

The protein resides in the cytoplasm. It is found in the cytoskeleton. It localises to the cilium basal body. The protein localises to the cell projection. Its subcellular location is the cilium. The protein resides in the microtubule organizing center. It is found in the centrosome. It localises to the centriole. Its function is as follows. Involved in ciliogenesis. It is required for appropriate acetylation and polyglutamylation of ciliary microtubules, and regulation of cilium length. Acts as a positive regulator of hedgehog (Hh)signaling. May participate in the trafficking and/or retention of GLI2 and GLI3 proteins at the ciliary tip. This chain is LisH domain-containing protein ARMC9 (ARMC9), found in Bos taurus (Bovine).